We begin with the raw amino-acid sequence, 575 residues long: Dihydroxy-acid dehydratase (575 aa).

A [2Fe-2S] cluster-binding site is contributed by Cys-64. A Mg(2+)-binding site is contributed by Asp-96. Cys-137 is a binding site for [2Fe-2S] cluster. The Mg(2+) site is built by Asp-138 and Lys-139. N6-carboxylysine is present on Lys-139. Residue Cys-214 coordinates [2Fe-2S] cluster. Glu-465 is a Mg(2+) binding site. Catalysis depends on Ser-491, which acts as the Proton acceptor.

It belongs to the IlvD/Edd family. In terms of assembly, homodimer. The cofactor is [2Fe-2S] cluster. Mg(2+) serves as cofactor.

It carries out the reaction (2R)-2,3-dihydroxy-3-methylbutanoate = 3-methyl-2-oxobutanoate + H2O. The enzyme catalyses (2R,3R)-2,3-dihydroxy-3-methylpentanoate = (S)-3-methyl-2-oxopentanoate + H2O. Its pathway is amino-acid biosynthesis; L-isoleucine biosynthesis; L-isoleucine from 2-oxobutanoate: step 3/4. It functions in the pathway amino-acid biosynthesis; L-valine biosynthesis; L-valine from pyruvate: step 3/4. Functions in the biosynthesis of branched-chain amino acids. Catalyzes the dehydration of (2R,3R)-2,3-dihydroxy-3-methylpentanoate (2,3-dihydroxy-3-methylvalerate) into 2-oxo-3-methylpentanoate (2-oxo-3-methylvalerate) and of (2R)-2,3-dihydroxy-3-methylbutanoate (2,3-dihydroxyisovalerate) into 2-oxo-3-methylbutanoate (2-oxoisovalerate), the penultimate precursor to L-isoleucine and L-valine, respectively. This chain is Dihydroxy-acid dehydratase, found in Mycobacterium bovis (strain ATCC BAA-935 / AF2122/97).